The primary structure comprises 1027 residues: MMWLSWKLFLFLSLIGCLSESVDYGPVFVQEPDDVIFPTDSEEKKVSLNCQAHGSPTPTYRWLRNGTEIDVESDYRYSLIEGSLIISNPNEMKDSGQYQCLTTNMFGSILSREAVLQFAYLGNFSGRTRSAVSVREGQGVVLMCSPPLHSPEIIYSWVFNEFPSFVAEDSRRFISQETGNLYISKVQTSDVGSYICLVKNTVTNARVLSPPTPLTLRNDGVMGEYEPKIEVHFPYTVTAARGTTVKMECFALGNPVPTISWKKVNGHNPSKARLRKSQAVLEIPNVQLEDAGMYECKAENSRGRNVFRGQLQVYTYPQWVEKLNDTELDSGEQLRWECKATGKPRPTYRWLKNGVPLWPQSRIEMINSVLMIRTVNISDAGMYQCLAENKYGTIYASAELKILASAPTFPLNQMRKTIIITKGQEVVIECKPQASPKPTITWKKGDKALRESKRVTILPQGSLRILNASKSDEGRYSCRGVNVFGSAEIVASVSVKEPTRIELTPKKIELTVGESIVLSCKALHDSTLDVTFYWTLNGQPIDFDKEDGHFESIKAQASSADLMIRNILLMHAGRYGCRVQTAADAVSDETELLVRGPPGPPGVVIVEEITDTTATLSWSPGADNHSPISLYNLQARSPFSLGWQTVKTVPDVISGDMESAMAVELNPWVEYEFRVVATNKIGTGDPSAPSRMIRTNEAVPKTPPANVSGRSGRRHELVIAWEPVSEEFQNGEGFGYIVAFRPNGTRGWKEKMVTSSDASKFIYRDESVPPLTPFEVKVGVYNNKGDGPFSPIVVICSAEGEPTAAPIDVKATSLSVSEILVAWKHIKESLGRPQGFEIGYWKDMEQEEAAEKVKTAGNESSLLLTGLEGNTLYHLTVRAYNAAGYGPPSTAVRVATKKSPPSQAPSNVMWIQDGSHVSLGWEPVRPLANESEVMGYKVLLRQEGQSNSQVIETQKTSAVVILPDVGVYIIEVCAVSEGGDGTASPQIRVPSYAGGKVTSAQSTLHMFSTSSSSVTLLLVLMVPSTSW.

Residues 1–19 (MMWLSWKLFLFLSLIGCLS) form the signal peptide. Ig-like C2-type domains lie at 32–117 (PDDV…AVLQ), 123–209 (NFSG…RVLS), 227–307 (PKIE…RNVF), 317–401 (PQWV…AELK), 407–494 (PTFP…ASVS), and 498–593 (PTRI…TELL). C50 and C100 form a disulfide bridge. Residues N65 and N123 are each glycosylated (N-linked (GlcNAc...) asparagine). 2 disulfides stabilise this stretch: C144–C196 and C249–C296. N324, N376, and N467 each carry an N-linked (GlcNAc...) asparagine glycan. Disulfide bonds link C338/C385, C430/C478, and C520/C577. Fibronectin type-III domains are found at residues 600 to 698 (PPGV…TNEA), 703 to 800 (PPAN…SAEG), 805 to 899 (APID…TKKS), and 901 to 994 (PSQA…SYAG). N706, N743, N858, and N929 each carry an N-linked (GlcNAc...) asparagine glycan. S999 carries the GPI-anchor amidated serine lipid modification. Residues 1000–1027 (AQSTLHMFSTSSSSVTLLLVLMVPSTSW) constitute a propeptide, removed in mature form.

This sequence belongs to the immunoglobulin superfamily. Contactin family. Interacts with INgCAM/L1 and the tenascin-R TNP protein. Does not interacts with NrCAM. As to expression, expressed by subpopulations of Purkinje cells in the cerebellum. Also expressed by one type of Purkinje cell afferents, the climbing fibers.

It localises to the cell membrane. Contactins mediate cell surface interactions during nervous system development. May contribute to the formation of somatotopic maps of cerebellar afferents during the development of the nervous system. In Gallus gallus (Chicken), this protein is Contactin-5 (CNTN5).